The primary structure comprises 534 residues: Tyrosine-protein kinase Fyn (534 aa).

G2 is lipidated: N-myristoyl glycine. S-palmitoyl cysteine attachment occurs at residues C3 and C6. A Phosphothreonine; by PKC modification is found at T12. The segment at 15 to 39 (TDERDGSLTQSSGYRYGTDPTPQHY) is disordered. In terms of domain architecture, SH3 spans 82–143 (TGVTLFEALY…PSNYVAPVDS (62 aa)). One can recognise an SH2 domain in the interval 149–246 (WYFGKLGRKD…GLCFNLTVIA (98 aa)). One can recognise a Protein kinase domain in the interval 268–521 (LFLEQKLGQG…YLQGFLEDYF (254 aa)). ATP contacts are provided by residues 274–282 (LGQGCFAEV) and K296. Catalysis depends on D387, which acts as the Proton acceptor. The residue at position 417 (Y417) is a Phosphotyrosine; by autocatalysis. Y528 carries the post-translational modification Phosphotyrosine.

This sequence belongs to the protein kinase superfamily. Tyr protein kinase family. SRC subfamily. As to quaternary structure, associates through its SH3 domain, to the p85 subunit of phosphatidylinositol 3-kinase. The cofactor is Mn(2+). As to expression, thymus and spleen.

It is found in the cytoplasm. The protein resides in the nucleus. The protein localises to the cell membrane. It localises to the perikaryon. The enzyme catalyses L-tyrosyl-[protein] + ATP = O-phospho-L-tyrosyl-[protein] + ADP + H(+). With respect to regulation, inhibited by phosphorylation of Tyr-528 by leukocyte common antigen and activated by dephosphorylation of this site. Its function is as follows. Tyrosine-protein kinase implicated in the control of cell growth. Plays a role in the regulation of intracellular calcium levels. Required in brain development and mature brain function with important roles in the regulation of axon growth, axon guidance, and neurite extension. Role in CNTN1-mediated signaling. This is Tyrosine-protein kinase Fyn (FYN) from Gallus gallus (Chicken).